The sequence spans 108 residues: UPF0145 protein Tery_3795 (108 aa).

It belongs to the UPF0145 family.

The polypeptide is UPF0145 protein Tery_3795 (Trichodesmium erythraeum (strain IMS101)).